Reading from the N-terminus, the 228-residue chain is uncharacterized protein (228 aa).

Residues 1-15 (MKQKYLFIASMALAG) form the signal peptide. The N-palmitoyl cysteine moiety is linked to residue Cys16. Cys16 carries the S-diacylglycerol cysteine lipid modification.

This sequence to P.multocida PM0015.

The protein localises to the cell membrane. This is an uncharacterized protein from Pasteurella multocida (strain Pm70).